Here is a 161-residue protein sequence, read N- to C-terminus: ATP synthase subunit b 1 (161 aa).

The chain crosses the membrane as a helical span at residues 6–26 (EFYVALGFVIFVAILLYYGVH).

The protein belongs to the ATPase B chain family. In terms of assembly, F-type ATPases have 2 components, F(1) - the catalytic core - and F(0) - the membrane proton channel. F(1) has five subunits: alpha(3), beta(3), gamma(1), delta(1), epsilon(1). F(0) has three main subunits: a(1), b(2) and c(10-14). The alpha and beta chains form an alternating ring which encloses part of the gamma chain. F(1) is attached to F(0) by a central stalk formed by the gamma and epsilon chains, while a peripheral stalk is formed by the delta and b chains.

The protein resides in the cell inner membrane. F(1)F(0) ATP synthase produces ATP from ADP in the presence of a proton or sodium gradient. F-type ATPases consist of two structural domains, F(1) containing the extramembraneous catalytic core and F(0) containing the membrane proton channel, linked together by a central stalk and a peripheral stalk. During catalysis, ATP synthesis in the catalytic domain of F(1) is coupled via a rotary mechanism of the central stalk subunits to proton translocation. Functionally, component of the F(0) channel, it forms part of the peripheral stalk, linking F(1) to F(0). This Beijerinckia indica subsp. indica (strain ATCC 9039 / DSM 1715 / NCIMB 8712) protein is ATP synthase subunit b 1.